The primary structure comprises 659 residues: Protein SCARECROW 1 (659 aa).

Disordered stretches follow at residues 1–33 and 188–285; these read MGSS…ITSL and SDPA…KQRD. The span at 190–228 shows a compositional bias: pro residues; it reads PAPPPPPPPSHPALLPPDATAPPPPPTSVAALPPPPPPQ. Positions 258–271 are enriched in low complexity; that stretch reads AAAAAAAAAAALAA. Residues 258 to 289 are a coiled coil; the sequence is AAAAAAAAAAALAAAKERKEEQRRKQRDEEGL. Residues 272 to 285 are compositionally biased toward basic and acidic residues; sequence AKERKEEQRRKQRD. In terms of domain architecture, GRAS spans 282 to 652; that stretch reads KQRDEEGLHL…LCLLTASAWR (371 aa). Residues 289–353 form a leucine repeat I (LRI) region; sequence LHLLTLLLQC…VSSCLGLYAP (65 aa). Positions 296 to 300 match the LxCxE motif motif; sequence LQCAE. The VHIID stretch occupies residues 372–437; that stretch reads FQVFNGISPF…GGPPRVRLTG (66 aa). The short motif at 403–407 is the VHIID element; it reads VHIID. Residues 447 to 479 are leucine repeat II (LRII); the sequence is ATGKRLSDFADTLGLPFEFCPVADKAGNLDPEK. The tract at residues 488-575 is PFYRE; the sequence is VAVHWLRHSL…QQLLSREIRN (88 aa). Positions 578–652 are SAW; sequence AVGGPARTGD…LCLLTASAWR (75 aa).

Belongs to the GRAS family. In terms of assembly, interacts with SHR1, but not with SHR2.

It is found in the nucleus. In terms of biological role, transcription factor required for quiescent center cells specification and maintenance of surrounding stem cells, and for the asymmetric cell division involved in radial pattern formation in roots. Essential for cell division but not differentiation of the ground tissue. Regulates the radial organization of the shoot axial organs. Restricts SHR movment and sequesters it into the nucleus of the endodermis. This is Protein SCARECROW 1 (SCR1) from Oryza sativa subsp. indica (Rice).